The sequence spans 311 residues: 4-diphosphocytidyl-2-C-methyl-D-erythritol kinase (311 aa).

Residue Lys13 is part of the active site. 114–124 provides a ligand contact to ATP; it reads PVAGGMAGGSA. Residue Asp156 is part of the active site.

This sequence belongs to the GHMP kinase family. IspE subfamily.

It carries out the reaction 4-CDP-2-C-methyl-D-erythritol + ATP = 4-CDP-2-C-methyl-D-erythritol 2-phosphate + ADP + H(+). Its pathway is isoprenoid biosynthesis; isopentenyl diphosphate biosynthesis via DXP pathway; isopentenyl diphosphate from 1-deoxy-D-xylulose 5-phosphate: step 3/6. Its function is as follows. Catalyzes the phosphorylation of the position 2 hydroxy group of 4-diphosphocytidyl-2C-methyl-D-erythritol. The polypeptide is 4-diphosphocytidyl-2-C-methyl-D-erythritol kinase (Corynebacterium diphtheriae (strain ATCC 700971 / NCTC 13129 / Biotype gravis)).